Reading from the N-terminus, the 213-residue chain is Protein SRN2 (213 aa).

Positions 128-213 constitute a VPS37 C-terminal domain; sequence SKYVASWQDY…TWDKQGNLKY (86 aa).

Belongs to the VPS37 family. Component of the ESCRT-I complex (endosomal sorting complex required for transport I) which consists of STP22, VPS28, SRN2 and MVB12 in a 1:1:1:1 stoichiometry. Interacts with STP22 and MVB12.

It localises to the cytoplasm. The protein localises to the endosome. Its subcellular location is the late endosome membrane. Its function is as follows. Component of the ESCRT-I complex, a regulator of vesicular trafficking process. Required for normal endocytic and biosynthetic traffic to the yeast vacuole. The polypeptide is Protein SRN2 (SRN2) (Saccharomyces cerevisiae (strain ATCC 204508 / S288c) (Baker's yeast)).